The chain runs to 390 residues: 8-amino-7-oxononanoate synthase (390 aa).

Arg19 is a binding site for substrate. Residue Gly106–Tyr107 participates in pyridoxal 5'-phosphate binding. His131 is a binding site for substrate. Positions 176, 204, and 233 each coordinate pyridoxal 5'-phosphate. At Lys236 the chain carries N6-(pyridoxal phosphate)lysine. Residue Thr350 coordinates substrate.

It belongs to the class-II pyridoxal-phosphate-dependent aminotransferase family. BioF subfamily. Homodimer. The cofactor is pyridoxal 5'-phosphate.

The enzyme catalyses 6-carboxyhexanoyl-[ACP] + L-alanine + H(+) = (8S)-8-amino-7-oxononanoate + holo-[ACP] + CO2. Its pathway is cofactor biosynthesis; biotin biosynthesis. Catalyzes the decarboxylative condensation of pimeloyl-[acyl-carrier protein] and L-alanine to produce 8-amino-7-oxononanoate (AON), [acyl-carrier protein], and carbon dioxide. This chain is 8-amino-7-oxononanoate synthase, found in Pseudomonas putida (strain GB-1).